Reading from the N-terminus, the 140-residue chain is MLINYLMLLFAAMIIRSFADSGNAIETTSPEITNATTDIPAIRLCGPEGDGYCLHGDCIHARDIDGMYCRCSHGYTGIRCQHVVLVDYQRSEKPNTTTSYIPSPGIMLVLVGIIIITCCLLSVYRFTRRTKLPIQDMVVP.

An N-terminal signal peptide occupies residues 1–18 (MLINYLMLLFAAMIIRSF). The Extracellular segment spans residues 19 to 100 (ADSGNAIETT…SEKPNTTTSY (82 aa)). N-linked (GlcNAc...) asparagine; by host glycosylation is present at Asn34. The EGF-like domain occupies 41–81 (AIRLCGPEGDGYCLHGDCIHARDIDGMYCRCSHGYTGIRCQ). Intrachain disulfides connect Cys45–Cys58, Cys53–Cys69, and Cys71–Cys80. Asn95 carries N-linked (GlcNAc...) asparagine; by host glycosylation. The helical transmembrane segment at 101–121 (IPSPGIMLVLVGIIIITCCLL) threads the bilayer. Residues 122-140 (SVYRFTRRTKLPIQDMVVP) lie on the Cytoplasmic side of the membrane.

This sequence belongs to the orthopoxvirus OPG019 family. In terms of assembly, interacts with host EGFR.

Its subcellular location is the host membrane. The protein resides in the secreted. In terms of biological role, stimulates cellular proliferation (hyperplasia)and mobility around infected cells to promote rapid and efficient spread of infection. This effect is beneficial for virus replication in vivo, because poxviruses replicate possibly better in proliferating cells than in quiescent cells. Acts by binding host EGFR, inducing its dimerization, autophosphorylation and leading to activation of several cellular pathways regulating cell proliferation or cell survival. The activation by host EGFR of mitogen activated protein kinases (MAPK) and extracellular-signal regulated kinases (ERK) are essential for the positive effect of vaccinia growth factor on poxvirus virulence in vivo. The protein is Pro-vaccinia growth factor (OPG019) of Homo sapiens (Human).